Consider the following 295-residue polypeptide: Protoheme IX farnesyltransferase (295 aa).

Transmembrane regions (helical) follow at residues 8-28 (VTKPGIIFGNLISVIGGFLLA), 35-55 (YPLFLSTLLGVSLVVASGCVF), 74-94 (VLVKGLIDPKVSLIYASVLGI), 98-118 (LLLYVAANALAMMLAVIGFVI), 132-152 (VYGTLIGSLSGAAPPVIGYCA), 162-182 (LILLLIFSLWQMPHSYAIAIF), 208-228 (ITLYILAFMVATLMLTLSGYA), 233-253 (LVVAAAVSVWWLGMALRGYKA), and 264-284 (FVFSIIAITSLSVMMSVDFNV).

It belongs to the UbiA prenyltransferase family. Protoheme IX farnesyltransferase subfamily.

Its subcellular location is the cell inner membrane. The enzyme catalyses heme b + (2E,6E)-farnesyl diphosphate + H2O = Fe(II)-heme o + diphosphate. It functions in the pathway porphyrin-containing compound metabolism; heme O biosynthesis; heme O from protoheme: step 1/1. Converts heme B (protoheme IX) to heme O by substitution of the vinyl group on carbon 2 of heme B porphyrin ring with a hydroxyethyl farnesyl side group. This is Protoheme IX farnesyltransferase from Yersinia pseudotuberculosis serotype O:1b (strain IP 31758).